The primary structure comprises 500 residues: Citrate lyase alpha chain (500 aa).

Oligomer with a subunit composition of (alpha,beta,gamma)6.

It is found in the cytoplasm. It catalyses the reaction citrate = oxaloacetate + acetate. It carries out the reaction citrate + acetyl-CoA = (3S)-citryl-CoA + acetate. Its function is as follows. Represents a citrate:acetyl-ACP transferase. This is Citrate lyase alpha chain (citF) from Haemophilus influenzae (strain ATCC 51907 / DSM 11121 / KW20 / Rd).